The following is a 564-amino-acid chain: Kelch-like protein 12 (564 aa).

Residues 29–96 (CDITLRVEGT…VYTETVLVTV (68 aa)) form the BTB domain. The 102-residue stretch at 131–232 (CLGIRDFAET…LTPRYITDVI (102 aa)) folds into the BACK domain. 6 Kelch repeats span residues 278-325 (VLLV…ALND), 327-375 (VYVI…TLGD), 376-422 (MIYV…VASG), 423-469 (LIYC…LLND), 471-516 (IYVV…VLRG), and 518-563 (LYAI…VLRE).

Component of the BCR(KLHL12) E3 ubiquitin ligase complex.

It is found in the cytoplasmic vesicle. The protein resides in the COPII-coated vesicle. It functions in the pathway protein modification; protein ubiquitination. Functionally, substrate-specific adapter of a BCR (BTB-CUL3-RBX1) E3 ubiquitin ligase complex that acts as a negative regulator of Wnt signaling pathway and ER-Golgi transport. The BCR(KLHL12) complex is involved in ER-Golgi transport by regulating the size of COPII coats, thereby playing a key role in collagen export, which is required for embryonic stem (ES) cells division. Negatively regulates the Wnt signaling pathway, possibly via the targeted ubiquitination and subsequent proteolysis of dvl2 and dvl3. Regulates convergent-extension movements during early embryonic development. The chain is Kelch-like protein 12 (klhl12) from Danio rerio (Zebrafish).